Here is a 461-residue protein sequence, read N- to C-terminus: Major capsid protein (461 aa).

Over residues 1–18 the composition is skewed to polar residues; the sequence is MSTPTISADTTAQNATST. Positions 1-22 are disordered; that stretch reads MSTPTISADTTAQNATSTEVRE.

It is found in the virion. In terms of biological role, major protein of the capsid. The chain is Major capsid protein (MCP) from Spodoptera frugiperda ascovirus 1a (SfAV-1a).